A 463-amino-acid polypeptide reads, in one-letter code: Glycogen synthase (463 aa).

Lys-15 lines the ADP-alpha-D-glucose pocket.

This sequence belongs to the glycosyltransferase 1 family. Bacterial/plant glycogen synthase subfamily.

The enzyme catalyses [(1-&gt;4)-alpha-D-glucosyl](n) + ADP-alpha-D-glucose = [(1-&gt;4)-alpha-D-glucosyl](n+1) + ADP + H(+). The protein operates within glycan biosynthesis; glycogen biosynthesis. Functionally, synthesizes alpha-1,4-glucan chains using ADP-glucose. This chain is Glycogen synthase, found in Aquifex aeolicus (strain VF5).